We begin with the raw amino-acid sequence, 95 residues long: Large ribosomal subunit protein bL27 (95 aa).

The propeptide occupies 1-10 (MLLTMNLQLF). The tract at residues 12–38 (HKKGGGSTSNGRDSESKRLGAKSADGQ) is disordered.

It belongs to the bacterial ribosomal protein bL27 family. Post-translationally, the N-terminus is cleaved by ribosomal processing cysteine protease Prp.

This is Large ribosomal subunit protein bL27 from Enterococcus faecalis (strain ATCC 700802 / V583).